Here is a 507-residue protein sequence, read N- to C-terminus: ATP synthase subunit alpha, mitochondrial (507 aa).

Residue 171–178 participates in ATP binding; that stretch reads GDRQTGKT.

This sequence belongs to the ATPase alpha/beta chains family. In terms of assembly, F-type ATPases have 2 components, CF(1) - the catalytic core - and CF(0) - the membrane proton channel. CF(1) has five subunits: alpha(3), beta(3), gamma(1), delta(1), epsilon(1). CF(0) has three main subunits: a, b and c.

Its subcellular location is the mitochondrion. It is found in the mitochondrion inner membrane. Its function is as follows. Mitochondrial membrane ATP synthase (F(1)F(0) ATP synthase or Complex V) produces ATP from ADP in the presence of a proton gradient across the membrane which is generated by electron transport complexes of the respiratory chain. F-type ATPases consist of two structural domains, F(1) - containing the extramembraneous catalytic core, and F(0) - containing the membrane proton channel, linked together by a central stalk and a peripheral stalk. During catalysis, ATP synthesis in the catalytic domain of F(1) is coupled via a rotary mechanism of the central stalk subunits to proton translocation. Subunits alpha and beta form the catalytic core in F(1). Rotation of the central stalk against the surrounding alpha(3)beta(3) subunits leads to hydrolysis of ATP in three separate catalytic sites on the beta subunits. Subunit alpha does not bear the catalytic high-affinity ATP-binding sites. The sequence is that of ATP synthase subunit alpha, mitochondrial (ATPA) from Pisum sativum (Garden pea).